The chain runs to 1015 residues: DExH-box ATP-dependent RNA helicase DExH8 (1015 aa).

Residues 36–197 (IDKILENRVT…FKELGRGERV (162 aa)) enclose the Helicase ATP-binding domain. An ATP-binding site is contributed by 49-56 (GEPGCGKS). The DEVH box motif lies at 144–147 (DEVH). The region spanning 254 to 419 (LIHDLILYIH…KLSLRQQVLH (166 aa)) is the Helicase C-terminal domain. C3H1-type zinc fingers lie at residues 727–753 (YGEA…THTL) and 754–782 (QSTR…HAMR).

Belongs to the DExH box helicase family.

The enzyme catalyses ATP + H2O = ADP + phosphate + H(+). The polypeptide is DExH-box ATP-dependent RNA helicase DExH8 (Arabidopsis thaliana (Mouse-ear cress)).